Consider the following 839-residue polypeptide: Homeobox-leucine zipper protein HOX10 (839 aa).

Disordered stretches follow at residues 1 to 24 (MAAAVAMRGSSSDGGGYDKVSGMD) and 132 to 157 (QNTPLANDTSCESNVTTPQNPLRDAS). The segment at residues 24-87 (DSGKYVRYTP…NRRCRDKQRK (64 aa)) is a DNA-binding region (homeobox). Positions 91-134 (RLQAVNRKLTAMNKLLMEENERLQKQVSQLVHENAHMRQQLQNT) form a coiled coil. The 229-residue stretch at 155 to 383 (DASNPSGLLS…IAQETSGEVV (229 aa)) folds into the START domain.

This sequence belongs to the HD-ZIP homeobox family. Class III subfamily. Expressed in stems, leaf sheaths and blades and panicles.

The protein resides in the nucleus. In terms of biological role, probable transcription factor. This Oryza sativa subsp. japonica (Rice) protein is Homeobox-leucine zipper protein HOX10 (HOX10).